Here is a 427-residue protein sequence, read N- to C-terminus: Peptidase B (427 aa).

Residues Lys195 and Asp200 each contribute to the Mn(2+) site. Lys207 is an active-site residue. Residues Asp218, Asp277, and Glu279 each contribute to the Mn(2+) site. The active site involves Arg281.

Belongs to the peptidase M17 family. As to quaternary structure, homohexamer. Mn(2+) serves as cofactor.

The protein localises to the cytoplasm. It catalyses the reaction Release of an N-terminal amino acid, Xaa, from a peptide or arylamide. Xaa is preferably Glu or Asp but may be other amino acids, including Leu, Met, His, Cys and Gln.. Probably plays an important role in intracellular peptide degradation. This chain is Peptidase B, found in Salmonella dublin (strain CT_02021853).